The sequence spans 635 residues: Biosynthetic arginine decarboxylase (635 aa).

Residue lysine 100 is modified to N6-(pyridoxal phosphate)lysine. 282-292 serves as a coordination point for substrate; sequence VDIGGGLGVDY.

It belongs to the Orn/Lys/Arg decarboxylase class-II family. SpeA subfamily. It depends on Mg(2+) as a cofactor. Requires pyridoxal 5'-phosphate as cofactor.

It carries out the reaction L-arginine + H(+) = agmatine + CO2. Its pathway is amine and polyamine biosynthesis; agmatine biosynthesis; agmatine from L-arginine: step 1/1. Functionally, catalyzes the biosynthesis of agmatine from arginine. This chain is Biosynthetic arginine decarboxylase, found in Geobacter metallireducens (strain ATCC 53774 / DSM 7210 / GS-15).